The sequence spans 56 residues: Attractin (56 aa).

Intrachain disulfides connect Cys-4-Cys-41, Cys-13-Cys-33, and Cys-20-Cys-26.

Produced by the albumen gland of the egg cordons.

It is found in the secreted. In terms of biological role, water-borne pheromone that attract the marine mollusk Aplysia into breeding aggregations and coordinate male and female reproductive behavior within the aggregation. This Aplysia vaccaria (California black sea hare) protein is Attractin (ATT).